An 84-amino-acid polypeptide reads, in one-letter code: uncharacterized protein (84 aa).

Residues 34 to 54 (ATSTASSSAAKNTTSSSKNAA) are compositionally biased toward low complexity. The interval 34 to 57 (ATSTASSSAAKNTTSSSKNAAPGM) is disordered. A glycan (N-linked (GlcNAc...) asparagine) is linked at Asn45. A helical membrane pass occupies residues 66–83 (YGIIMAAFAAVSFVLGTG).

The protein resides in the endoplasmic reticulum membrane. This is an uncharacterized protein from Saccharomyces cerevisiae (strain ATCC 204508 / S288c) (Baker's yeast).